We begin with the raw amino-acid sequence, 172 residues long: Translation initiation factor IF-3 (172 aa).

This sequence belongs to the IF-3 family. As to quaternary structure, monomer.

The protein localises to the cytoplasm. Its function is as follows. IF-3 binds to the 30S ribosomal subunit and shifts the equilibrium between 70S ribosomes and their 50S and 30S subunits in favor of the free subunits, thus enhancing the availability of 30S subunits on which protein synthesis initiation begins. The protein is Translation initiation factor IF-3 of Bartonella henselae (strain ATCC 49882 / DSM 28221 / CCUG 30454 / Houston 1) (Rochalimaea henselae).